A 697-amino-acid polypeptide reads, in one-letter code: Polyribonucleotide nucleotidyltransferase (697 aa).

2 residues coordinate Mg(2+): D488 and D494. Positions 555–614 constitute a KH domain; sequence PTFEVITINPDKIRDVIGKGGATIRQITEETKAAIDIEDNGTVRVFGETKAAAKAAIAKI. Positions 624–692 constitute an S1 motif domain; it reads GKIYDGKVIR…NRGRIKLTMK (69 aa).

Belongs to the polyribonucleotide nucleotidyltransferase family. Component of the RNA degradosome, which is a multiprotein complex involved in RNA processing and mRNA degradation. Mg(2+) is required as a cofactor.

The protein resides in the cytoplasm. It catalyses the reaction RNA(n+1) + phosphate = RNA(n) + a ribonucleoside 5'-diphosphate. Functionally, involved in mRNA degradation. Catalyzes the phosphorolysis of single-stranded polyribonucleotides processively in the 3'- to 5'-direction. The chain is Polyribonucleotide nucleotidyltransferase from Acinetobacter baumannii (strain AB307-0294).